Here is a 194-residue protein sequence, read N- to C-terminus: Histone H1.0 (194 aa).

Position 1 is an N-acetylmethionine (methionine 1). A disordered region spans residues 1 to 26 (MTENSTSTPAAKPKRAKAAKKSTDHP). Position 2 is an N-acetylthreonine; in Histone H1.0, N-terminally processed (threonine 2). The region spanning 24-97 (DHPKYSDMIV…GASGSFRLAK (74 aa)) is the H15 domain. Arginine 42 is subject to Citrulline. A disordered region spans residues 86–194 (GVGASGSFRL…SSAKRASKKK (109 aa)). ADP-ribosylserine is present on serine 104. Residues 105-194 (VAFKKTKKEV…SSAKRASKKK (90 aa)) show a composition bias toward basic residues.

The protein belongs to the histone H1/H5 family. In terms of processing, ADP-ribosylated on Ser-104 in response to DNA damage.

Its subcellular location is the nucleus. It is found in the chromosome. Its function is as follows. Histones H1 are necessary for the condensation of nucleosome chains into higher-order structures. The histones H1.0 are found in cells that are in terminal stages of differentiation or that have low rates of cell division. This chain is Histone H1.0 (H1-0), found in Rattus norvegicus (Rat).